A 220-amino-acid chain; its full sequence is Protein-L-isoaspartate O-methyltransferase (220 aa).

Residue S65 is part of the active site.

This sequence belongs to the methyltransferase superfamily. L-isoaspartyl/D-aspartyl protein methyltransferase family.

It localises to the cytoplasm. It catalyses the reaction [protein]-L-isoaspartate + S-adenosyl-L-methionine = [protein]-L-isoaspartate alpha-methyl ester + S-adenosyl-L-homocysteine. Its function is as follows. Catalyzes the methyl esterification of L-isoaspartyl residues in peptides and proteins that result from spontaneous decomposition of normal L-aspartyl and L-asparaginyl residues. It plays a role in the repair and/or degradation of damaged proteins. The chain is Protein-L-isoaspartate O-methyltransferase from Pelodictyon phaeoclathratiforme (strain DSM 5477 / BU-1).